Here is a 378-residue protein sequence, read N- to C-terminus: Probable pectin lyase A (378 aa).

An N-terminal signal peptide occupies residues 1–18; that stretch reads MKYQDLLAIAGCIANAGA. 2 disulfide bridges follow: C81–C100 and C90–C224. An N-linked (GlcNAc...) asparagine glycan is attached at N127. Residue R254 is part of the active site. C321 and C329 are oxidised to a cystine.

This sequence belongs to the polysaccharide lyase 1 family.

Its subcellular location is the secreted. It catalyses the reaction Eliminative cleavage of (1-&gt;4)-alpha-D-galacturonan methyl ester to give oligosaccharides with 4-deoxy-6-O-methyl-alpha-D-galact-4-enuronosyl groups at their non-reducing ends.. Pectinolytic enzymes consist of four classes of enzymes: pectin lyase, polygalacturonase, pectin methylesterase and rhamnogalacturonase. Among pectinolytic enzymes, pectin lyase is the most important in depolymerization of pectin, since it cleaves internal glycosidic bonds of highly methylated pectins. This Aspergillus fumigatus (strain CBS 144.89 / FGSC A1163 / CEA10) (Neosartorya fumigata) protein is Probable pectin lyase A (pelA).